Here is a 143-residue protein sequence, read N- to C-terminus: Transcriptional regulator MraZ (143 aa).

2 consecutive SpoVT-AbrB domains span residues 5–47 and 76–119; these read EYHH…PMQG and ATEC…SRSR.

Belongs to the MraZ family. Forms oligomers.

Its subcellular location is the cytoplasm. The protein localises to the nucleoid. The protein is Transcriptional regulator MraZ of Moorella thermoacetica (strain ATCC 39073 / JCM 9320).